The following is a 393-amino-acid chain: S-adenosylmethionine synthase 2 (393 aa).

A Mg(2+)-binding site is contributed by E9. H15 contributes to the ATP binding site. E43 lines the K(+) pocket. 2 residues coordinate L-methionine: E56 and Q99. Residues 167 to 169 (DGK), 235 to 238 (SGRF), D246, 252 to 253 (RK), A269, K273, and K277 each bind ATP. D246 contributes to the L-methionine binding site. K277 contacts L-methionine.

This sequence belongs to the AdoMet synthase family. As to quaternary structure, homotetramer. Requires Mn(2+) as cofactor. Mg(2+) serves as cofactor. Co(2+) is required as a cofactor. The cofactor is K(+). It depends on NH4(+) as a cofactor. As to expression, mostly expressed in roots, and, to a lower extent, in hypocotyls and cotyledons.

The protein localises to the cytoplasm. The catalysed reaction is L-methionine + ATP + H2O = S-adenosyl-L-methionine + phosphate + diphosphate. Its pathway is amino-acid biosynthesis; S-adenosyl-L-methionine biosynthesis; S-adenosyl-L-methionine from L-methionine: step 1/1. Its activity is regulated as follows. Inhibited by products of SAMS reaction (SAM, Pi, PPi), substrate analogs (cycloleucine and ethionine), and alternative nucleotides (GTP, CTP and ADP). Strongly repressed by PPPi. Functionally, catalyzes the formation of S-adenosylmethionine from methionine and ATP. The reaction comprises two steps that are both catalyzed by the same enzyme: formation of S-adenosylmethionine (AdoMet) and triphosphate, and subsequent hydrolysis of the triphosphate. This is S-adenosylmethionine synthase 2 (SAMS2) from Catharanthus roseus (Madagascar periwinkle).